A 147-amino-acid polypeptide reads, in one-letter code: Ribonuclease 4 (147 aa).

The signal sequence occupies residues 1 to 28 (MALQRTHSLLLLLLLTLLGLGLVQPSYG). The residue at position 29 (glutamine 29) is a Pyrrolidone carboxylic acid. DUMP contacts are provided by arginine 35, histidine 40, lysine 68, asparagine 71, and threonine 72. Histidine 40 functions as the Proton acceptor in the catalytic mechanism. 4 disulfides stabilise this stretch: cysteine 53-cysteine 109, cysteine 67-cysteine 120, cysteine 85-cysteine 135, and cysteine 92-cysteine 99. Histidine 144 acts as the Proton donor in catalysis. Phenylalanine 145 provides a ligand contact to dUMP.

It belongs to the pancreatic ribonuclease family.

Its subcellular location is the secreted. Functionally, cleaves preferentially after uridine bases. Has antimicrobial activity against uropathogenic E.coli (UPEC). Probably contributes to urinary tract sterility. This Pan troglodytes (Chimpanzee) protein is Ribonuclease 4 (RNASE4).